The chain runs to 760 residues: Probable myosin-binding protein 4 (760 aa).

Residues 26–46 form a helical membrane-spanning segment; that stretch reads WFLILLMFIDALLSYLLVWFA. 4 disordered regions span residues 161–189, 247–273, 292–311, and 348–595; these read SRGRNSSSKPNIPAPRHLTRRGSGGSLKK, SEKRTHKSRRRKSFDDKKMSNHKQPVL, SMLGYNLENRTRQKQPVKAK, and EAEV…KHSA. Residues 352 to 366 are compositionally biased toward low complexity; sequence SGSSSPSGGEFLSPS. The span at 371 to 383 shows a compositional bias: basic and acidic residues; that stretch reads ASREIRIQEHDDS. The span at 385 to 394 shows a compositional bias: polar residues; the sequence is DFSQNITSSA. Residues 388–416 adopt a coiled-coil conformation; sequence QNITSSAMEIEEFEAAIEQKESDHMDVSG. Positions 404–413 are enriched in basic and acidic residues; it reads IEQKESDHMD. Acidic residues-rich tracts occupy residues 446–458 and 517–526; these read LEQEQSGEEESEV and EEDVDNEESE. Basic and acidic residues-rich tracts occupy residues 537-550 and 562-580; these read VKEEHSAKEEHGDH and SKEEPSLEHSDKDSLKITE. In terms of domain architecture, GTD-binding spans 611 to 709; the sequence is SLVEVLKQQL…DLEMELEYYR (99 aa). The segment at 725-760 is disordered; it reads GILGNTEETNVTSPTDETSIKDSTDTKLTGSPSAEN. Composition is skewed to polar residues over residues 730–741 and 750–760; these read TEETNVTSPTDE and TKLTGSPSAEN.

The protein resides in the endomembrane system. Membrane-anchored myosin receptors that define a distinct, plant-specific transport vesicle compartment. In Arabidopsis thaliana (Mouse-ear cress), this protein is Probable myosin-binding protein 4.